Reading from the N-terminus, the 76-residue chain is Acyl carrier protein (76 aa).

Positions 1 to 76 (MSIEERVKKI…SAIDYVQNNQ (76 aa)) constitute a Carrier domain. Ser36 carries the post-translational modification O-(pantetheine 4'-phosphoryl)serine.

This sequence belongs to the acyl carrier protein (ACP) family. Post-translationally, 4'-phosphopantetheine is transferred from CoA to a specific serine of apo-ACP by AcpS. This modification is essential for activity because fatty acids are bound in thioester linkage to the sulfhydryl of the prosthetic group.

It localises to the cytoplasm. The protein operates within lipid metabolism; fatty acid biosynthesis. Its function is as follows. Carrier of the growing fatty acid chain in fatty acid biosynthesis. In Mannheimia succiniciproducens (strain KCTC 0769BP / MBEL55E), this protein is Acyl carrier protein.